We begin with the raw amino-acid sequence, 142 residues long: Acidic phospholipase A2 PA4 (142 aa).

The Ca(2+) site is built by W10, G12, and G14. Intrachain disulfides connect C11/C33, C32/C72, and C39/C65. H36 is an active-site residue. Position 37 (D37) interacts with Ca(2+).

This sequence belongs to the phospholipase A2 family. Group III subfamily. It depends on Ca(2+) as a cofactor. As to expression, expressed by the venom gland.

It localises to the secreted. The catalysed reaction is a 1,2-diacyl-sn-glycero-3-phosphocholine + H2O = a 1-acyl-sn-glycero-3-phosphocholine + a fatty acid + H(+). In terms of biological role, PLA2 catalyzes the calcium-dependent hydrolysis of the 2-acyl groups in 3-sn-phosphoglycerides. The sequence is that of Acidic phospholipase A2 PA4 from Heloderma suspectum (Gila monster).